The chain runs to 383 residues: S-adenosylmethionine:tRNA ribosyltransferase-isomerase (383 aa).

Belongs to the QueA family. Monomer.

The protein resides in the cytoplasm. It catalyses the reaction 7-aminomethyl-7-carbaguanosine(34) in tRNA + S-adenosyl-L-methionine = epoxyqueuosine(34) in tRNA + adenine + L-methionine + 2 H(+). It functions in the pathway tRNA modification; tRNA-queuosine biosynthesis. Transfers and isomerizes the ribose moiety from AdoMet to the 7-aminomethyl group of 7-deazaguanine (preQ1-tRNA) to give epoxyqueuosine (oQ-tRNA). In Rickettsia prowazekii (strain Madrid E), this protein is S-adenosylmethionine:tRNA ribosyltransferase-isomerase.